The chain runs to 510 residues: Dermokine (510 aa).

Positions 1-21 (MKLKGSLACLLLFLLLGSGEA) are cleaved as a signal peptide. The tract at residues 117–362 (VDPAHKSWQG…SSGEGEAVSG (246 aa)) is disordered. Positions 124–137 (WQGTPGSNGAWGTN) are enriched in polar residues. The segment covering 141 to 158 (PSGGHGIPGSQGSSGGPG) has biased composition (gly residues). Residues 194–221 (GANSQGTSPQPGSVRSNNNRNTECTTPP) are compositionally biased toward polar residues. Gly residues-rich tracts occupy residues 222–231 (GSGGSSGNSG), 240–254 (TNGG…GGSN), and 264–292 (SNGG…GGSN). Low complexity-rich tracts occupy residues 293–303 (AGSSGSSGSSS) and 319–332 (PSPS…SGVR). A compositionally biased stretch (gly residues) spans 344–355 (GGSGGQGQGSSG).

The protein belongs to the dermokine family. As to quaternary structure, homooligomer. Seems to be able to homodimerize and homotrimerize. O-glycosylated.

It localises to the secreted. In terms of biological role, may act as a soluble regulator of keratinocyte differentiation. In Bos taurus (Bovine), this protein is Dermokine (DMKN).